The sequence spans 290 residues: Zinc finger AN1 and C2H2 domain-containing stress-associated protein 16 (290 aa).

AN1-type zinc fingers lie at residues 7–55 and 95–145; these read PNLG…QKDV and VTKK…KPES. Zn(2+) is bound by residues C13, C18, C28, C31, C36, H39, H45, C47, C101, C106, C118, C121, C126, H129, H135, and C137. 2 C2H2-type zinc fingers span residues 224–247 and 261–284; these read EQCVQCPARFSTVGALIEHCEKSH and DVCPKCSKAFRDPVLLVEHVERDH.

May be involved in environmental stress response. This Oryza sativa subsp. japonica (Rice) protein is Zinc finger AN1 and C2H2 domain-containing stress-associated protein 16 (SAP16).